The following is a 510-amino-acid chain: GMP synthase [glutamine-hydrolyzing] (510 aa).

Positions 5-195 (MIVVLDFGSQ…VFEVCGCRGD (191 aa)) constitute a Glutamine amidotransferase type-1 domain. Cys82 functions as the Nucleophile in the catalytic mechanism. Residues His169 and Glu171 contribute to the active site. Residues 196–385 (WTMENFIDEQ…LGIPDEIVWR (190 aa)) enclose the GMPS ATP-PPase domain. 223-229 (SGGVDSS) contacts ATP.

Homodimer.

It catalyses the reaction XMP + L-glutamine + ATP + H2O = GMP + L-glutamate + AMP + diphosphate + 2 H(+). It functions in the pathway purine metabolism; GMP biosynthesis; GMP from XMP (L-Gln route): step 1/1. Catalyzes the synthesis of GMP from XMP. The protein is GMP synthase [glutamine-hydrolyzing] of Geobacillus kaustophilus (strain HTA426).